Consider the following 285-residue polypeptide: Small ribosomal subunit protein uS5x (285 aa).

A compositionally biased stretch (basic and acidic residues) spans 1-19 (MAERGGERGVERGGERGDF). The segment at 1 to 51 (MAERGGERGVERGGERGDFGRGFGGRGGRGDRGGRGRGGRGGRRGGRASEE) is disordered. The span at 35–46 (RGRGGRGGRRGG) shows a compositional bias: basic residues. Residues 96–159 (LKDEVMKIMP…ILAKLSVVPV (64 aa)) enclose the S5 DRBM domain.

It belongs to the universal ribosomal protein uS5 family. As to quaternary structure, interacts with MBD6.

Its function is as follows. Component of the ribosome, a large ribonucleoprotein complex responsible for the synthesis of proteins in the cell. The small ribosomal subunit (SSU) binds messenger RNAs (mRNAs) and translates the encoded message by selecting cognate aminoacyl-transfer RNA (tRNA) molecules. The large subunit (LSU) contains the ribosomal catalytic site termed the peptidyl transferase center (PTC), which catalyzes the formation of peptide bonds, thereby polymerizing the amino acids delivered by tRNAs into a polypeptide chain. The nascent polypeptides leave the ribosome through a tunnel in the LSU and interact with protein factors that function in enzymatic processing, targeting, and the membrane insertion of nascent chains at the exit of the ribosomal tunnel. Plays a role in the assembly and function of the 40S ribosomal subunit. Mutations in this protein affects the control of translational fidelity. Involved in nucleolar processing of pre-18S ribosomal RNA and ribosome assembly. Also involved in RNA-directed DNA methylation (RdDM). The protein is Small ribosomal subunit protein uS5x of Arabidopsis thaliana (Mouse-ear cress).